Reading from the N-terminus, the 130-residue chain is Small ribosomal subunit protein uS11c (130 aa).

Belongs to the universal ribosomal protein uS11 family. Part of the 30S ribosomal subunit.

Its subcellular location is the plastid. The protein resides in the chloroplast. This is Small ribosomal subunit protein uS11c from Pinus thunbergii (Japanese black pine).